Here is a 336-residue protein sequence, read N- to C-terminus: Aspartate--ammonia ligase (336 aa).

It belongs to the class-II aminoacyl-tRNA synthetase family. AsnA subfamily.

Its subcellular location is the cytoplasm. The catalysed reaction is L-aspartate + NH4(+) + ATP = L-asparagine + AMP + diphosphate + H(+). It functions in the pathway amino-acid biosynthesis; L-asparagine biosynthesis; L-asparagine from L-aspartate (ammonia route): step 1/1. The sequence is that of Aspartate--ammonia ligase from Limosilactobacillus reuteri (strain DSM 20016) (Lactobacillus reuteri).